Consider the following 147-residue polypeptide: 3-hydroxyacyl-[acyl-carrier-protein] dehydratase FabZ (147 aa).

The active site involves His-51.

The protein belongs to the thioester dehydratase family. FabZ subfamily.

It localises to the cytoplasm. The enzyme catalyses a (3R)-hydroxyacyl-[ACP] = a (2E)-enoyl-[ACP] + H2O. In terms of biological role, involved in unsaturated fatty acids biosynthesis. Catalyzes the dehydration of short chain beta-hydroxyacyl-ACPs and long chain saturated and unsaturated beta-hydroxyacyl-ACPs. The chain is 3-hydroxyacyl-[acyl-carrier-protein] dehydratase FabZ from Anaplasma marginale (strain Florida).